A 255-amino-acid chain; its full sequence is Taurine import ATP-binding protein TauB (255 aa).

Positions 2 to 229 (LQISHLYADY…RFVAGESSRS (228 aa)) constitute an ABC transporter domain. 34-41 (GPSGCGKT) serves as a coordination point for ATP.

Belongs to the ABC transporter superfamily. Taurine importer (TC 3.A.1.17.1) family. The complex is composed of two ATP-binding proteins (TauB), two transmembrane proteins (TauC) and a solute-binding protein (TauA).

The protein resides in the cell inner membrane. It catalyses the reaction taurine(out) + ATP + H2O = taurine(in) + ADP + phosphate + H(+). Part of the ABC transporter complex TauABC involved in taurine import. Responsible for energy coupling to the transport system. The polypeptide is Taurine import ATP-binding protein TauB (Shigella boydii serotype 4 (strain Sb227)).